Consider the following 121-residue polypeptide: Large ribosomal subunit protein bL12 (121 aa).

This sequence belongs to the bacterial ribosomal protein bL12 family. In terms of assembly, homodimer. Part of the ribosomal stalk of the 50S ribosomal subunit. Forms a multimeric L10(L12)X complex, where L10 forms an elongated spine to which 2 to 4 L12 dimers bind in a sequential fashion. Binds GTP-bound translation factors.

Forms part of the ribosomal stalk which helps the ribosome interact with GTP-bound translation factors. Is thus essential for accurate translation. This is Large ribosomal subunit protein bL12 from Tremblaya princeps.